Reading from the N-terminus, the 819-residue chain is MRQMKYQFKFNPLAAAIFTLLCGGSMQSSYADANDSASSVDNKKLKESIQKAYPGQEFFEQYYVEKSSPEAQVRDTRSLSSAFCTGTWITPISPTTQAVPADQATSVVTADYAHYNPNGDSELEGNVLIDQQGRSIRANKVTIDRTQTYANAEGNVQLAQAGLLAQSDQINYNLKTQQGDLKNSFYISEQQHAHGHAEQIQRTSPTEIILRNATYTTCPPEQKPTWRLEAKEIKLNQDTGRGTTKNTKLYVKDVPILAVPYFNFPIDNRRTTGILNPNIGFSNDGGLELTVPVYLNLAPNYDATLTPRYISDRGVMLQSEFRYLTENFGQGKIWGGYLPDDKKYNNEDRKDFNLLHKWKINDYWSTDVEYHYASDKDYVTDLDTNPDSKTDLNLRRAWTLKYKNQIPGLTAQLKVEDFQTLDKTVSDVDKPYARLPQFLLNYVTGNPLGLQYEFNNDTAYFKKNIDDAANYSTQPSGTRIYNQFATRYNFRTPWAFAIPEVSIRSINTFYDQNTVENLGLNSDNKSKSVVVPQFSLDTGLIFQRDGDYLQTITPRAFYAYAPYKNQTGYPNFDTTSASINYDQLFSPYRFYGHDRLEDNNFLSLGVSYSLFDPQGLERLRAGVGQSFYFADRRVTLNNTDDTIDTSKNSGPIVSISSQLTNKFTVAANSAWMSNGDNAQHDFQTYYTGDHGNLYNLGYFNRKNIPDRQLAYDAAVASFVQPIMNNWRIMGHVQFDFRNNVAREYLLGVNYESCCYAISVYGRSYYNDLDDPKDPNVNVKRAVMAEITFKGLGGLNNKLASLLENRVLGFKEINQSWTQR.

A signal peptide spans 1–33; it reads MRQMKYQFKFNPLAAAIFTLLCGGSMQSSYADA.

Belongs to the LptD family. Component of the lipopolysaccharide transport and assembly complex. Interacts with LptE and LptA.

It is found in the cell outer membrane. Its function is as follows. Together with LptE, is involved in the assembly of lipopolysaccharide (LPS) at the surface of the outer membrane. The polypeptide is LPS-assembly protein LptD (Acinetobacter baylyi (strain ATCC 33305 / BD413 / ADP1)).